Here is a 90-residue protein sequence, read N- to C-terminus: Darcynin 1 (90 aa).

This sequence belongs to the darcynin family.

The sequence is that of Darcynin 1 from Acinetobacter baumannii (strain ATCC 17978 / DSM 105126 / CIP 53.77 / LMG 1025 / NCDC KC755 / 5377).